The primary structure comprises 706 residues: Probable E3 ubiquitin ligase complex SCF subunit sconB (706 aa).

A compositionally biased stretch (basic and acidic residues) spans Met1–Ser12. Disordered regions lie at residues Met1–Gln43 and Thr56–Ala76. The segment covering Gln34–Gln43 has biased composition (low complexity). The 47-residue stretch at Ile203–Met249 folds into the F-box domain. 7 WD repeats span residues Gly377–Thr414, Gly417–Thr456, His458–Leu494, Gly496–His537, Ala589–Thr632, Gly635–Thr672, and Gly675–Asn706.

The protein belongs to the WD repeat MET30/SCONB/SCON-2 family. Component of the SCF(sconB) E3 ubiquitin ligase complex.

Its pathway is protein modification; protein ubiquitination. Component of the SCF(sconB) E3 ubiquitin ligase complex involved in the regulation of sulfur metabolite repression, probably by mediating the inactivation or degradation of the metR transcription factor. This Aspergillus flavus (strain ATCC 200026 / FGSC A1120 / IAM 13836 / NRRL 3357 / JCM 12722 / SRRC 167) protein is Probable E3 ubiquitin ligase complex SCF subunit sconB (sconB).